We begin with the raw amino-acid sequence, 296 residues long: Ribosomal RNA small subunit methyltransferase A (296 aa).

S-adenosyl-L-methionine is bound by residues Asn-30, Leu-32, Gly-57, Glu-78, Asp-103, and Asn-128.

Belongs to the class I-like SAM-binding methyltransferase superfamily. rRNA adenine N(6)-methyltransferase family. RsmA subfamily.

The protein localises to the cytoplasm. The catalysed reaction is adenosine(1518)/adenosine(1519) in 16S rRNA + 4 S-adenosyl-L-methionine = N(6)-dimethyladenosine(1518)/N(6)-dimethyladenosine(1519) in 16S rRNA + 4 S-adenosyl-L-homocysteine + 4 H(+). In terms of biological role, specifically dimethylates two adjacent adenosines (A1518 and A1519) in the loop of a conserved hairpin near the 3'-end of 16S rRNA in the 30S particle. May play a critical role in biogenesis of 30S subunits. The protein is Ribosomal RNA small subunit methyltransferase A of Staphylococcus carnosus (strain TM300).